Reading from the N-terminus, the 260-residue chain is Probable carbohydrate esterase At4g34215 (260 aa).

A disordered region spans residues 1 to 22; sequence MEGGSITPGEDKPEIQSPIPPN. Residues serine 31, aspartate 235, and histidine 238 contribute to the active site.

The protein belongs to the carbohydrate esterase 6 family.

This is Probable carbohydrate esterase At4g34215 from Arabidopsis thaliana (Mouse-ear cress).